We begin with the raw amino-acid sequence, 308 residues long: Ribosomal RNA small subunit methyltransferase A (308 aa).

S-adenosyl-L-methionine contacts are provided by Asn-35, Val-37, Gly-62, Glu-83, Asp-113, and Asn-136.

The protein belongs to the class I-like SAM-binding methyltransferase superfamily. rRNA adenine N(6)-methyltransferase family. RsmA subfamily.

The protein resides in the cytoplasm. The catalysed reaction is adenosine(1518)/adenosine(1519) in 16S rRNA + 4 S-adenosyl-L-methionine = N(6)-dimethyladenosine(1518)/N(6)-dimethyladenosine(1519) in 16S rRNA + 4 S-adenosyl-L-homocysteine + 4 H(+). Specifically dimethylates two adjacent adenosines (A1518 and A1519) in the loop of a conserved hairpin near the 3'-end of 16S rRNA in the 30S particle. May play a critical role in biogenesis of 30S subunits. The sequence is that of Ribosomal RNA small subunit methyltransferase A from Bifidobacterium longum (strain NCC 2705).